Consider the following 266-residue polypeptide: Large ribosomal subunit protein uL2m (266 aa).

This sequence belongs to the universal ribosomal protein uL2 family.

The protein resides in the mitochondrion. The chain is Large ribosomal subunit protein uL2m (mrpl2) from Dictyostelium citrinum (Slime mold).